The following is a 413-amino-acid chain: Putative tRNA pseudouridine synthase C16C4.06c (413 aa).

The Nucleophile role is filled by Asp96. Position 154 (Tyr154) interacts with substrate.

It belongs to the tRNA pseudouridine synthase TruA family.

The protein localises to the cytoplasm. Its subcellular location is the nucleus. It catalyses the reaction a uridine in tRNA = a pseudouridine in tRNA. The chain is Putative tRNA pseudouridine synthase C16C4.06c from Schizosaccharomyces pombe (strain 972 / ATCC 24843) (Fission yeast).